The primary structure comprises 74 residues: MAKKESYEEMLTKLQDILSNLETDDLNLEESMKSYEEGVKLVNKIYKILDSYEAKISIIKDDKELEFSEDYGDK.

It belongs to the XseB family. In terms of assembly, heterooligomer composed of large and small subunits.

The protein localises to the cytoplasm. The catalysed reaction is Exonucleolytic cleavage in either 5'- to 3'- or 3'- to 5'-direction to yield nucleoside 5'-phosphates.. Functionally, bidirectionally degrades single-stranded DNA into large acid-insoluble oligonucleotides, which are then degraded further into small acid-soluble oligonucleotides. The sequence is that of Exodeoxyribonuclease 7 small subunit from Clostridium beijerinckii (strain ATCC 51743 / NCIMB 8052) (Clostridium acetobutylicum).